A 343-amino-acid polypeptide reads, in one-letter code: Methionine synthase (343 aa).

Zn(2+)-binding residues include His-211, Cys-213, Glu-236, and Cys-315.

It belongs to the archaeal MetE family. Requires Zn(2+) as cofactor.

It participates in amino-acid biosynthesis; L-methionine biosynthesis via de novo pathway. In terms of biological role, catalyzes the transfer of a methyl group to L-homocysteine resulting in methionine formation. The physiological methyl donor is unknown. This chain is Methionine synthase, found in Thermoplasma acidophilum (strain ATCC 25905 / DSM 1728 / JCM 9062 / NBRC 15155 / AMRC-C165).